We begin with the raw amino-acid sequence, 1347 residues long: Protein dispatched homolog 3 (1347 aa).

Over methionine 1–cysteine 67 the chain is Cytoplasmic. Residues alanine 68–leucine 88 form a helical membrane-spanning segment. Residues tyrosine 89 to aspartate 417 are Lumenal-facing. The interval glycine 156–glycine 207 is disordered. An N-linked (GlcNAc...) asparagine glycan is attached at asparagine 157. Low complexity predominate over residues serine 159–serine 168. The SSD domain maps to arginine 412–leucine 570. A helical membrane pass occupies residues methionine 418–cysteine 438. A topological domain (cytoplasmic) is located at residue serine 439. The helical transmembrane segment at valine 440–leucine 460 threads the bilayer. At tyrosine 461 to valine 463 the chain is on the lumenal side. A helical membrane pass occupies residues valine 464–isoleucine 484. Topologically, residues glycine 485–alanine 528 are cytoplasmic. The chain crosses the membrane as a helical span at residues alanine 529–methionine 549. A topological domain (lumenal) is located at residue serine 550. The helical transmembrane segment at leucine 551–tryptophan 571 threads the bilayer. At serine 572–arginine 684 the chain is on the cytoplasmic side. Residues tryptophan 685 to leucine 705 form a helical membrane-spanning segment. At arginine 706 to serine 1137 the chain is on the lumenal side. N-linked (GlcNAc...) asparagine glycosylation occurs at asparagine 976. A helical transmembrane segment spans residues alanine 1138 to threonine 1158. A topological domain (cytoplasmic) is located at residue histidine 1159. A helical membrane pass occupies residues valine 1160–isoleucine 1180. Residues methionine 1181–valine 1246 are Lumenal-facing. The chain crosses the membrane as a helical span at residues alanine 1247–isoleucine 1267. Topologically, residues alanine 1268–threonine 1281 are cytoplasmic. The helical transmembrane segment at glycine 1282–glycine 1302 threads the bilayer. Topologically, residues serine 1303–serine 1310 are lumenal. Residues phenylalanine 1311–valine 1331 traverse the membrane as a helical segment. Residues leucine 1332–leucine 1347 are Cytoplasmic-facing.

The protein belongs to the patched family. As to expression, expressed in brain, retina, testis and thymus.

The protein resides in the endoplasmic reticulum membrane. It localises to the nucleus membrane. The protein localises to the cytoplasmic vesicle membrane. Plays a role in neuronal proliferation and differentiation. Plays a role in the accumulation of cellular cholesterol. Involved in intracellular lipid droplet formation. May contribute to cholesterol homeostasis in neuronal cells. The chain is Protein dispatched homolog 3 from Mus musculus (Mouse).